We begin with the raw amino-acid sequence, 445 residues long: Acyl-CoA Delta-4 desaturase (445 aa).

The Cytochrome b5 heme-binding domain maps to 19-96; sequence AGVYTWEEVQ…MKPLLVGELA (78 aa). 4 helical membrane-spanning segments follow: residues 132–152, 153–173, 266–286, and 307–327; these read LFFL…LLMV, WHWG…ATAQ, YFFL…NIMM, and YMLC…MMFA.

The protein belongs to the fatty acid desaturase type 1 family.

It is found in the membrane. It catalyses the reaction (8Z,11Z,14Z,17Z)-eicosatetraenoyl-CoA + 2 Fe(II)-[cytochrome b5] + O2 + 2 H(+) = (5Z,8Z,11Z,14Z,17Z)-eicosapentaenoyl-CoA + 2 Fe(III)-[cytochrome b5] + 2 H2O. The catalysed reaction is (7Z,10Z,13Z,16Z)-docosatetraenoyl-CoA + 2 Fe(II)-[cytochrome b5] + O2 + 2 H(+) = (4Z,7Z,10Z,13Z,16Z)-docosapentaenoyl-CoA + 2 Fe(III)-[cytochrome b5] + 2 H2O. The enzyme catalyses (7Z,10Z,13Z,16Z,19Z)-docosapentaenoyl-CoA + 2 Fe(II)-[cytochrome b5] + O2 + 2 H(+) = (4Z,7Z,10Z,13Z,16Z,19Z)-docosahexaenoyl-CoA + 2 Fe(III)-[cytochrome b5] + 2 H2O. Its pathway is lipid metabolism; polyunsaturated fatty acid biosynthesis. In terms of biological role, fatty acid desaturase with bifunctional delta-4 and delta-5 activities. Component of a lipid metabolic pathway that catalyzes the biosynthesis of polyunsaturated fatty acids (PUFA) with preference toward n-3 substrates and Delta(4)function. In Siganus canaliculatus (White-spotted spinefoot), this protein is Acyl-CoA Delta-4 desaturase.